The primary structure comprises 217 residues: Probable transaldolase (217 aa).

K83 serves as the catalytic Schiff-base intermediate with substrate.

Belongs to the transaldolase family. Type 3B subfamily.

It localises to the cytoplasm. It carries out the reaction D-sedoheptulose 7-phosphate + D-glyceraldehyde 3-phosphate = D-erythrose 4-phosphate + beta-D-fructose 6-phosphate. Its pathway is carbohydrate degradation; pentose phosphate pathway; D-glyceraldehyde 3-phosphate and beta-D-fructose 6-phosphate from D-ribose 5-phosphate and D-xylulose 5-phosphate (non-oxidative stage): step 2/3. Its function is as follows. Transaldolase is important for the balance of metabolites in the pentose-phosphate pathway. The polypeptide is Probable transaldolase (Pseudothermotoga lettingae (strain ATCC BAA-301 / DSM 14385 / NBRC 107922 / TMO) (Thermotoga lettingae)).